A 518-amino-acid polypeptide reads, in one-letter code: Mitochondrial distribution and morphology protein 34 (518 aa).

Residues 1–198 form the SMP-LTD domain; sequence MSFKVNWNTL…LPTLIHRLSL (198 aa). Disordered regions lie at residues 335-369 and 491-518; these read SRPK…SEMS and IPDV…PYQV. The segment covering 336–350 has biased composition (basic residues); that stretch reads RPKRRVIKLGSKKSS. Residues 492 to 506 are compositionally biased toward basic and acidic residues; the sequence is PDVKSHPGTGRKLDT.

Belongs to the MDM34 family. In terms of assembly, component of the ER-mitochondria encounter structure (ERMES) or MDM complex, composed of MMM1, MDM10, MDM12 and MDM34.

It is found in the mitochondrion outer membrane. Its function is as follows. Component of the ERMES/MDM complex, which serves as a molecular tether to connect the endoplasmic reticulum (ER) and mitochondria. Components of this complex are involved in the control of mitochondrial shape and protein biogenesis, and function in nonvesicular lipid trafficking between the ER and mitochondria. MDM34 is required for the interaction of the ER-resident membrane protein MMM1 and the outer mitochondrial membrane-resident beta-barrel protein MDM10. This Meyerozyma guilliermondii (strain ATCC 6260 / CBS 566 / DSM 6381 / JCM 1539 / NBRC 10279 / NRRL Y-324) (Yeast) protein is Mitochondrial distribution and morphology protein 34.